A 91-amino-acid polypeptide reads, in one-letter code: DNA-directed RNA polymerase subunit Rpo11 (91 aa).

This sequence belongs to the archaeal Rpo11/eukaryotic RPB11/RPC19 RNA polymerase subunit family. Part of the RNA polymerase complex.

It is found in the cytoplasm. The enzyme catalyses RNA(n) + a ribonucleoside 5'-triphosphate = RNA(n+1) + diphosphate. DNA-dependent RNA polymerase (RNAP) catalyzes the transcription of DNA into RNA using the four ribonucleoside triphosphates as substrates. This Methanothrix thermoacetophila (strain DSM 6194 / JCM 14653 / NBRC 101360 / PT) (Methanosaeta thermophila) protein is DNA-directed RNA polymerase subunit Rpo11.